The chain runs to 385 residues: Exopolygalacturonase rpg15 (385 aa).

The N-terminal stretch at 1 to 26 (MVRFISFTSPIAALLLLSFGVKHAST) is a signal peptide. Asn143, Asn161, Asn164, and Asn180 each carry an N-linked (GlcNAc...) asparagine glycan. 4 PbH1 repeats span residues 165–195 (STNLVLHDFTLHTVSNNSYLPKNTDALDLYH), 196–217 (SSGITFRDSMLTIGDDCVAIKE), 219–241 (VEKVIVSNVTCRGGHGYSIGSLG), and 249–270 (VKHVNFRNSTCIDCENGVRVKT). The active-site Proton donor is Asp210. A disulfide bridge connects residues Cys212 and Cys229. The N-linked (GlcNAc...) asparagine glycan is linked to Asn226. Residue His233 is part of the active site. N-linked (GlcNAc...) asparagine glycosylation is found at Asn256, Asn319, and Asn343. Cysteines 344 and 350 form a disulfide. The PbH1 5 repeat unit spans residues 350–376 (CSDITFSGIDITKASNTTDNVCVYLEG). An N-linked (GlcNAc...) asparagine glycan is attached at Asn365.

Belongs to the glycosyl hydrolase 28 family. Post-translationally, N-glycosylated.

It is found in the secreted. It carries out the reaction [(1-&gt;4)-alpha-D-galacturonosyl](n) + H2O = alpha-D-galacturonate + [(1-&gt;4)-alpha-D-galacturonosyl](n-1). Specific in hydrolyzing the terminal glycosidic bond of polygalacturonic acid and oligogalacturonates. The protein is Exopolygalacturonase rpg15 of Rhizopus delemar (strain RA 99-880 / ATCC MYA-4621 / FGSC 9543 / NRRL 43880) (Mucormycosis agent).